Reading from the N-terminus, the 158-residue chain is UPF0225 protein Pfl01_1218 (158 aa).

Belongs to the UPF0225 family.

The chain is UPF0225 protein Pfl01_1218 from Pseudomonas fluorescens (strain Pf0-1).